We begin with the raw amino-acid sequence, 335 residues long: MSPSATDNSDGPDATVLTLRKVLTSESEPLARRFRALFSLKYLACQQPATEKTLPAIQAIAAAFTSPSALLKHELAYCLGQTRNPESVPYLQEVVKDTEQDTMCRHEAAEALGALGYEDSLEILKVLRDNKDEPDVIRETCDIAVDRILWENSEQRKAEKLKASDFTSIDPAPPLPMATSEPSIPDIEKRLLDTSLPLFQRYRAMFALRDLASPPDLPTATHAVEALAKGLKDPSALFRHEIAFVFGQLSHPASIPSLTEALSDQNEVGMVRHEAAEALGSLGDCEGVEDTLKKFLNDPEQVVRDSVIVALDMAEYEKNGEIEYALVPDSGVAAA.

5 HEAT-like PBS-type repeats span residues 71–97, 104–130, 200–233, 238–264, and 271–298; these read LKHE…VVKD, CRHE…LRDN, QRYR…GLKD, FRHE…ALSD, and VRHE…FLND. The Fe cation site is built by His73, Glu74, His106, and Glu107. Residues His240, Glu241, His273, and Glu274 each contribute to the Fe cation site.

It belongs to the deoxyhypusine hydroxylase family. Requires Fe(2+) as cofactor.

The protein localises to the cytoplasm. It is found in the nucleus. It carries out the reaction [eIF5A protein]-deoxyhypusine + AH2 + O2 = [eIF5A protein]-hypusine + A + H2O. It participates in protein modification; eIF5A hypusination. In terms of biological role, catalyzes the hydroxylation of the N(6)-(4-aminobutyl)-L-lysine intermediate to form hypusine, an essential post-translational modification only found in mature eIF-5A factor. The chain is Deoxyhypusine hydroxylase (lia1) from Aspergillus clavatus (strain ATCC 1007 / CBS 513.65 / DSM 816 / NCTC 3887 / NRRL 1 / QM 1276 / 107).